The primary structure comprises 434 residues: Trigger factor (434 aa).

The PPIase FKBP-type domain maps to 161 to 246 (EDRVTVDFSG…LKKVEERELP (86 aa)).

The protein belongs to the FKBP-type PPIase family. Tig subfamily.

It localises to the cytoplasm. It carries out the reaction [protein]-peptidylproline (omega=180) = [protein]-peptidylproline (omega=0). Its function is as follows. Involved in protein export. Acts as a chaperone by maintaining the newly synthesized protein in an open conformation. Functions as a peptidyl-prolyl cis-trans isomerase. The chain is Trigger factor from Serratia proteamaculans (strain 568).